Here is a 91-residue protein sequence, read N- to C-terminus: Cell division topological specificity factor (91 aa).

Belongs to the MinE family.

In terms of biological role, prevents the cell division inhibition by proteins MinC and MinD at internal division sites while permitting inhibition at polar sites. This ensures cell division at the proper site by restricting the formation of a division septum at the midpoint of the long axis of the cell. This Lachnospira eligens (strain ATCC 27750 / DSM 3376 / VPI C15-48 / C15-B4) (Eubacterium eligens) protein is Cell division topological specificity factor.